The following is a 210-amino-acid chain: Dephospho-CoA kinase (210 aa).

Residues 4–202 (WVGLTGGIGS…AFYSGIFASK (199 aa)) form the DPCK domain. Residue 12-17 (GSGKSA) participates in ATP binding.

It belongs to the CoaE family.

It localises to the cytoplasm. The catalysed reaction is 3'-dephospho-CoA + ATP = ADP + CoA + H(+). It participates in cofactor biosynthesis; coenzyme A biosynthesis; CoA from (R)-pantothenate: step 5/5. Its function is as follows. Catalyzes the phosphorylation of the 3'-hydroxyl group of dephosphocoenzyme A to form coenzyme A. This chain is Dephospho-CoA kinase, found in Neisseria gonorrhoeae.